The sequence spans 160 residues: MAEQTEKAFLKQPKVFLSSKKSGKGKRPGKGGNRFWKNIGLGFKTPREAIDGAYVDKKCPFTGTVSIRGRILAGTCHSAKMQRTIIVRRDYLHFVKKYQRYEKRHSNIPAHVSPCFRVKEGDHIIIGQCRPLSKTVRFNVLKVIPAGSSSSFGKKAFTGM.

The protein belongs to the universal ribosomal protein uS17 family.

It is found in the cytoplasm. The protein is Small ribosomal subunit protein uS17z (RPS11A) of Arabidopsis thaliana (Mouse-ear cress).